Reading from the N-terminus, the 181-residue chain is Cytochrome P450 monooxygenase dtpC (181 aa).

Cys125 is a binding site for heme.

It belongs to the cytochrome P450 family. It depends on heme as a cofactor.

Its pathway is alkaloid biosynthesis. The protein operates within secondary metabolite biosynthesis. Its function is as follows. Cytochrome P450 monooxygenase; part of the gene cluster that mediates the biosynthesis of the dimeric diketopiperazine alkaloid ditryptophenaline. The nonribosomal peptide synthase dtpA accepts L-tryptophan and L-phenylalanine as its substrates and forms the phenylalanyl-tryptophanyl cyclic dipeptide product cyclophenylalanyltryptophenyl. The N-methyltransferase dtpB is responsible for the N-methylation of cyclophenylalanyltryptophenyl to yield cyclo-N-methylphenylalanyltryptophenyl. The cytochrome P450 monooxygenase is responsible not only for pyrroloindole ring formation but also for concurrent dimerization of N-methylphenylalanyltryptophanyl diketopiperazine monomers into a homodimeric product. The chain is Cytochrome P450 monooxygenase dtpC from Aspergillus flavus (strain ATCC 200026 / FGSC A1120 / IAM 13836 / NRRL 3357 / JCM 12722 / SRRC 167).